The sequence spans 262 residues: 4-hydroxy-2-oxo-heptane-1,7-dioate aldolase (262 aa).

The Proton acceptor role is filled by His45. Gln147 contributes to the substrate binding site. Glu149 contacts a divalent metal cation. Ala174 and Asp175 together coordinate substrate. Asp175 lines the a divalent metal cation pocket.

The protein belongs to the HpcH/HpaI aldolase family. As to quaternary structure, homohexamer; trimer of dimers. A divalent metal cation serves as cofactor.

The catalysed reaction is 4-hydroxy-2-oxoheptanedioate = succinate semialdehyde + pyruvate. It participates in aromatic compound metabolism; 4-hydroxyphenylacetate degradation; pyruvate and succinate semialdehyde from 4-hydroxyphenylacetate: step 7/7. Its function is as follows. Catalyzes the reversible retro-aldol cleavage of 4-hydroxy-2-ketoheptane-1,7-dioate (HKHD) to pyruvate and succinic semialdehyde. The protein is 4-hydroxy-2-oxo-heptane-1,7-dioate aldolase of Shigella boydii serotype 18 (strain CDC 3083-94 / BS512).